Here is a 154-residue protein sequence, read N- to C-terminus: tRNA (cytidine(34)-2'-O)-methyltransferase (154 aa).

Leucine 78, glycine 100, leucine 122, and serine 130 together coordinate S-adenosyl-L-methionine.

Belongs to the class IV-like SAM-binding methyltransferase superfamily. RNA methyltransferase TrmH family. TrmL subfamily. In terms of assembly, homodimer.

It is found in the cytoplasm. The catalysed reaction is cytidine(34) in tRNA + S-adenosyl-L-methionine = 2'-O-methylcytidine(34) in tRNA + S-adenosyl-L-homocysteine + H(+). It catalyses the reaction 5-carboxymethylaminomethyluridine(34) in tRNA(Leu) + S-adenosyl-L-methionine = 5-carboxymethylaminomethyl-2'-O-methyluridine(34) in tRNA(Leu) + S-adenosyl-L-homocysteine + H(+). Its function is as follows. Methylates the ribose at the nucleotide 34 wobble position in the two leucyl isoacceptors tRNA(Leu)(CmAA) and tRNA(Leu)(cmnm5UmAA). Catalyzes the methyl transfer from S-adenosyl-L-methionine to the 2'-OH of the wobble nucleotide. This Methylovorus glucosotrophus (strain SIP3-4) protein is tRNA (cytidine(34)-2'-O)-methyltransferase.